The following is a 1042-amino-acid chain: Probable serine/threonine protein kinase IRE4 (1042 aa).

Composition is skewed to basic and acidic residues over residues Met1–Gly10, Glu102–Glu115, and Gln314–Lys327. 3 disordered regions span residues Met1–Leu75, Pro90–Glu115, and Trp297–Lys327. A C2H2-type; atypical zinc finger spans residues Cys402–Cys421. The Protein kinase domain occupies Phe670 to Phe955. ATP contacts are provided by residues Ile676–Val684 and Lys699. The active-site Proton acceptor is Asp793. A disordered region spans residues Glu830 to Arg850. The residue at position 854 (Ser854) is a Phosphoserine. Positions Gln956–Phe1042 constitute an AGC-kinase C-terminal domain.

It belongs to the protein kinase superfamily. AGC Ser/Thr protein kinase family.

It catalyses the reaction L-seryl-[protein] + ATP = O-phospho-L-seryl-[protein] + ADP + H(+). It carries out the reaction L-threonyl-[protein] + ATP = O-phospho-L-threonyl-[protein] + ADP + H(+). In Arabidopsis thaliana (Mouse-ear cress), this protein is Probable serine/threonine protein kinase IRE4.